The following is a 298-amino-acid chain: MSNAREIRSKVQSVKNTQKITGAMELVAASKMRGAIVKMNNVRPYVESANTIIKNVTAASIDYPNPYLFDRDVKRVGYIVTSTDRGLCGGLNINLFKHVLKEIKNNIEDRVGVDVCVIGSKAENFFAKLKDVNIVATAHYNDKDKEGSIRAIGGAVKVMLDKFTAGEIDRLYMSSNQFVSTIKQRPRLQTLLPIQDIFSAEEIKANKEKATKGHWDYIYERDIEEVLNALCIRYIEAQVRGAILENAACEQAARMMAMKNATDNASDIIDQLKLDYNKVRQAMITQELAEICSGAAAV.

Belongs to the ATPase gamma chain family. In terms of assembly, F-type ATPases have 2 components, CF(1) - the catalytic core - and CF(0) - the membrane proton channel. CF(1) has five subunits: alpha(3), beta(3), gamma(1), delta(1), epsilon(1). CF(0) has three main subunits: a, b and c.

The protein localises to the cell inner membrane. In terms of biological role, produces ATP from ADP in the presence of a proton gradient across the membrane. The gamma chain is believed to be important in regulating ATPase activity and the flow of protons through the CF(0) complex. This chain is ATP synthase gamma chain, found in Francisella tularensis subsp. holarctica (strain FTNF002-00 / FTA).